The primary structure comprises 179 residues: ADP-ribosylation factor (179 aa).

Gly-2 is lipidated: N-myristoyl glycine. Residues 24–31, 67–71, and 126–129 each bind GTP; these read GLDAAGKT, DVGGQ, and NKQD.

This sequence belongs to the small GTPase superfamily. Arf family.

The protein resides in the golgi apparatus. Its function is as follows. GTP-binding protein involved in protein trafficking; may modulate vesicle budding and uncoating within the Golgi apparatus. This is ADP-ribosylation factor (ARF1) from Candida albicans (strain SC5314 / ATCC MYA-2876) (Yeast).